The following is a 514-amino-acid chain: Peptide chain release factor 3 (514 aa).

The tr-type G domain occupies 8-268 (KKRRTFAIIS…TFLKFAPEPH (261 aa)). GTP-binding positions include 17 to 24 (SHPDAGKT), 85 to 89 (DTPGH), and 139 to 142 (NKLD).

The protein belongs to the TRAFAC class translation factor GTPase superfamily. Classic translation factor GTPase family. PrfC subfamily.

The protein localises to the cytoplasm. Increases the formation of ribosomal termination complexes and stimulates activities of RF-1 and RF-2. It binds guanine nucleotides and has strong preference for UGA stop codons. It may interact directly with the ribosome. The stimulation of RF-1 and RF-2 is significantly reduced by GTP and GDP, but not by GMP. This is Peptide chain release factor 3 from Streptococcus sanguinis (strain SK36).